Here is an 86-residue protein sequence, read N- to C-terminus: Anti-adapter protein IraP (86 aa).

Positions 1-36 (MKNLIAELLLKLAQKEEESKELCAQVEALEIIVTAM) form a coiled coil.

Belongs to the IraP family. Interacts with RssB.

It is found in the cytoplasm. Inhibits RpoS proteolysis by regulating RssB activity, thereby increasing the stability of the sigma stress factor RpoS especially during phosphate starvation, but also in stationary phase and during nitrogen starvation. Its effect on RpoS stability is due to its interaction with RssB, which probably blocks the interaction of RssB with RpoS, and the consequent delivery of the RssB-RpoS complex to the ClpXP protein degradation pathway. The protein is Anti-adapter protein IraP of Shigella boydii serotype 4 (strain Sb227).